The following is a 132-amino-acid chain: Large ribosomal subunit protein uL22c (132 aa).

It belongs to the universal ribosomal protein uL22 family. In terms of assembly, part of the 50S ribosomal subunit.

It is found in the plastid. The protein localises to the chloroplast. Functionally, this protein binds specifically to 23S rRNA. In terms of biological role, the globular domain of the protein is located near the polypeptide exit tunnel on the outside of the subunit, while an extended beta-hairpin is found that lines the wall of the exit tunnel in the center of the 70S ribosome. The sequence is that of Large ribosomal subunit protein uL22c (rpl22) from Staurastrum punctulatum (Green alga).